A 162-amino-acid chain; its full sequence is Scytalone dehydratase-like protein claB (162 aa).

Substrate is bound at residue Tyr48. Residues His83 and His108 contribute to the active site.

It belongs to the scytalone dehydratase family.

The protein operates within pigment biosynthesis. In terms of biological role, scytalone dehydratase-like protein; part of the gene cluster that mediates the biosynthesis of the bianthraquinone cladofulvin, a conidial pigment not required for virulence but that plays a role in fitness and resistance to environmental stresses including UV light and low-temperature stress. The pathway begins with the synthesis of atrochrysone thioester by the polyketide synthase (PKS) claG. The atrochrysone carboxyl ACP thioesterase claF then breaks the thioester bond and releases the atrochrysone carboxylic acid from claG. This compound is decarboxylated by claH to yield emodin, which is further converted to chrysophanol hydroquinone by the reductase claC and the dehydratase claB. The cytochrome P450 monooxygenase claM then catalyzes the dimerization of nataloe-emodin to cladofulvin. The polypeptide is Scytalone dehydratase-like protein claB (Passalora fulva (Tomato leaf mold)).